The following is a 532-amino-acid chain: MLLQAFLFLLAGFAAKISASMTNETSDRPLVHFTPNKGWMNDPNGLWYDEKDAKWHLYFQYNPNDTVWGTPLFWGHATSDDLTNWEDQPIAIAPKRNDSGAFSGSMVVDYNNTSGFFNDTIDPRQRCVAIWTYNTPESEEQYISYSLDGGYTFTEYQKNPVLAANSTQFRDPKVFWYEPSQKWIMTAAKSQDYKIEIYSSDDLKSWKLESAFANEGFLGYQYECPGLIEVPTEQDPSKSYWVMFISINPGAPAGGSFNQYFVGSFNGTHFEAFDNQSRVVDFGKDYYALQTFFNTDPTYGSALGIAWASNWEYSAFVPTNPWRSSMSLVRKFSLNTEYQANPETELINLKAEPILNISNAGPWSRFATNTTLTKANSYNVDLSNSTGTLEFELVYAVNTTQTISKSVFADLSLWFKGLEDPEEYLRMGFEVSASSFFLDRGNSKVKFVKENPYFTNRMSVNNQPFKSENDLSYYKVYGLLDQNILELYFNDGDVVSTNTYFMTTGNALGSVNMTTGVDNLFYIDKFQVREVK.

The signal sequence occupies residues 1-19 (MLLQAFLFLLAGFAAKISA). Asn-23 carries N-linked (GlcNAc...) asparagine glycosylation. Residues 39-42 (WMND) and Gln-60 each bind substrate. Asp-42 is a catalytic residue. The N-linked (GlcNAc...) asparagine; partial glycan is linked to Asn-64. N-linked (GlcNAc...) asparagine glycosylation is present at Asn-97. A substrate-binding site is contributed by 102–103 (FS). N-linked (GlcNAc...) asparagine glycans are attached at residues Asn-111 and Asn-118. Residue Asn-165 is glycosylated (N-linked (GlcNAc...) asparagine; partial). Residues 170-171 (RD) and Glu-223 each bind substrate. N-linked (GlcNAc...) asparagine; partial glycosylation is found at Asn-266 and Asn-275. Trp-311 serves as a coordination point for substrate. 4 N-linked (GlcNAc...) asparagine glycosylation sites follow: Asn-356, Asn-369, Asn-384, and Asn-398. N-linked (GlcNAc...) asparagine; partial glycosylation occurs at Asn-512.

Belongs to the glycosyl hydrolase 32 family. In terms of processing, isoform Secreted is glycosylated. Isoform Intracellular is not glycosylated.

It is found in the cytoplasm. The protein resides in the secreted. It carries out the reaction Hydrolysis of terminal non-reducing beta-D-fructofuranoside residues in beta-D-fructofuranosides.. This Saccharomyces cerevisiae (strain ATCC 204508 / S288c) (Baker's yeast) protein is Invertase 2 (SUC2).